The primary structure comprises 335 residues: Glyceraldehyde-3-phosphate dehydrogenase 2 (335 aa).

Residues 13-14 (RI), aspartate 35, and arginine 80 each bind NAD(+). A phosphoserine mark is found at serine 125 and serine 151. 151 to 153 (SCT) contacts D-glyceraldehyde 3-phosphate. Cysteine 152 functions as the Nucleophile in the catalytic mechanism. Residues threonine 153, threonine 154, threonine 182, and threonine 184 each carry the phosphothreonine modification. D-glyceraldehyde 3-phosphate is bound at residue threonine 182. A phosphoserine mark is found at serine 192, serine 203, and serine 209. Threonine 211 is modified (phosphothreonine). Residues 211–212 (TG) and arginine 234 contribute to the D-glyceraldehyde 3-phosphate site. Phosphothreonine is present on threonine 237. Serine 241 bears the Phosphoserine mark. Residue asparagine 316 coordinates NAD(+).

This sequence belongs to the glyceraldehyde-3-phosphate dehydrogenase family. In terms of assembly, homotetramer.

Its subcellular location is the cytoplasm. It catalyses the reaction D-glyceraldehyde 3-phosphate + phosphate + NAD(+) = (2R)-3-phospho-glyceroyl phosphate + NADH + H(+). The protein operates within carbohydrate degradation; glycolysis; pyruvate from D-glyceraldehyde 3-phosphate: step 1/5. This Schizosaccharomyces pombe (strain 972 / ATCC 24843) (Fission yeast) protein is Glyceraldehyde-3-phosphate dehydrogenase 2 (gpd3).